A 415-amino-acid polypeptide reads, in one-letter code: Polyketide biosynthesis malonyl-ACP decarboxylase PksF (415 aa).

The Ketosynthase family 3 (KS3) domain maps to 6-407; that stretch reads LPEVVVTGVG…GMNTAVCIQN (402 aa).

It belongs to the thiolase-like superfamily. Beta-ketoacyl-ACP synthases family.

The protein resides in the cytoplasm. It carries out the reaction malonyl-[ACP] + H(+) = acetyl-[ACP] + CO2. Its pathway is antibiotic biosynthesis; bacillaene biosynthesis. Involved in some intermediate steps for the synthesis of the antibiotic polyketide bacillaene which is involved in secondary metabolism. It decarboxylates selectively the malonyl group attached on the acyl-carrier-protein AcpK (Mal-AcpK). The sequence is that of Polyketide biosynthesis malonyl-ACP decarboxylase PksF (pksF) from Bacillus subtilis (strain 168).